A 363-amino-acid polypeptide reads, in one-letter code: UDP-N-acetylglucosamine--N-acetylmuramyl-(pentapeptide) pyrophosphoryl-undecaprenol N-acetylglucosamine transferase (363 aa).

UDP-N-acetyl-alpha-D-glucosamine contacts are provided by residues 14–16, arginine 171, serine 200, and glutamine 290; that span reads TGG.

This sequence belongs to the glycosyltransferase 28 family. MurG subfamily.

The protein localises to the cell inner membrane. The enzyme catalyses di-trans,octa-cis-undecaprenyl diphospho-N-acetyl-alpha-D-muramoyl-L-alanyl-D-glutamyl-meso-2,6-diaminopimeloyl-D-alanyl-D-alanine + UDP-N-acetyl-alpha-D-glucosamine = di-trans,octa-cis-undecaprenyl diphospho-[N-acetyl-alpha-D-glucosaminyl-(1-&gt;4)]-N-acetyl-alpha-D-muramoyl-L-alanyl-D-glutamyl-meso-2,6-diaminopimeloyl-D-alanyl-D-alanine + UDP + H(+). It participates in cell wall biogenesis; peptidoglycan biosynthesis. Functionally, cell wall formation. Catalyzes the transfer of a GlcNAc subunit on undecaprenyl-pyrophosphoryl-MurNAc-pentapeptide (lipid intermediate I) to form undecaprenyl-pyrophosphoryl-MurNAc-(pentapeptide)GlcNAc (lipid intermediate II). The chain is UDP-N-acetylglucosamine--N-acetylmuramyl-(pentapeptide) pyrophosphoryl-undecaprenol N-acetylglucosamine transferase from Borrelia garinii subsp. bavariensis (strain ATCC BAA-2496 / DSM 23469 / PBi) (Borreliella bavariensis).